A 667-amino-acid polypeptide reads, in one-letter code: E3 ubiquitin-protein ligase Midline-1 (667 aa).

The segment at 10–60 adopts an RING-type zinc-finger fold; it reads CPICLELFEDPLLLPCAHSLCFNCAHRILVSHCATNEPVESINAFQCPTCR. 2 positions are modified to phosphoserine: serine 92 and serine 96. B box-type zinc fingers lie at residues 116-165 and 172-212; these read KVLC…IEPI and GLMC…VAAL. Zn(2+)-binding residues include cysteine 119, cysteine 122, cysteine 134, cysteine 137, cysteine 142, cysteine 145, histidine 150, histidine 159, cysteine 175, histidine 178, cysteine 198, and histidine 204. A coiled-coil region spans residues 205–264; that stretch reads RDHQVAALSERYDKLKQNLESNLTNLIKRNTELETLLAKLIQTCQHVEVNASRQEAKLTE. Residues 320–379 enclose the COS domain; that stretch reads LKENDHARFLQTAKNITERVSMATASSQVLIPEINLNDTFDTFALDFSREKKLLECLDYL. The region spanning 381–484 is the Fibronectin type-III domain; that stretch reads APNPPTIREE…EPGKLKTNSQ (104 aa). The segment covering 471–485 has biased composition (polar residues); it reads SRSSEPGKLKTNSQP. Residues 471 to 524 form a disordered region; the sequence is SRSSEPGKLKTNSQPFKLDPKSAHRKLKVSHDNLTVERDESSSKKSHTPERFTS. One can recognise a B30.2/SPRY domain in the interval 482–659; the sequence is NSQPFKLDPK…IITGLPIPDH (178 aa). Basic and acidic residues predominate over residues 499–520; it reads VSHDNLTVERDESSSKKSHTPE. Position 511 is a phosphoserine (serine 511).

Belongs to the TRIM/RBCC family. Homodimer or heterodimer with MID2. Interacts with IGBP1.

It localises to the cytoplasm. The protein localises to the cytoskeleton. It catalyses the reaction S-ubiquitinyl-[E2 ubiquitin-conjugating enzyme]-L-cysteine + [acceptor protein]-L-lysine = [E2 ubiquitin-conjugating enzyme]-L-cysteine + N(6)-ubiquitinyl-[acceptor protein]-L-lysine.. Has E3 ubiquitin ligase activity towards IGBP1, promoting its monoubiquitination, which results in deprotection of the catalytic subunit of protein phosphatase PP2A, and its subsequent degradation by polyubiquitination. The chain is E3 ubiquitin-protein ligase Midline-1 (Mid1) from Rattus norvegicus (Rat).